We begin with the raw amino-acid sequence, 446 residues long: Baeyer-Villiger monooxygenase dmxR6 (446 aa).

Belongs to the AflY oxidoreductase family.

The protein operates within secondary metabolite biosynthesis. Functionally, baeyer-Villiger monooxygenase; part of the gene cluster that mediates the biosynthesis of the dimeric xanthones cryptosporioptides. The pathway begins with the synthesis of atrochrysone thioester by the polyketide synthase dmx-nrPKS. The atrochrysone carboxyl ACP thioesterase dmxR1 then breaks the thioester bond and releases the atrochrysone carboxylic acid from dmx-nrPKS. Atrochrysone carboxylic acid is decarboxylated by the decarboxylase dmxR15, and oxidized by the anthrone oxygenase dmxR16 to yield emodin. Emodin is then reduced to emodin hydroquinone by the oxidoreductase dmxR7. A-ring reduction by the short chain dehydrogenase dmxR18, dehydration by the scytalone dehydratase-like protein dmxR17 and probable spontaneous re-oxidation, results in overall deoxygenation to chrysophanol. Baeyer-Villiger oxidation by the Baeyer-Villiger monooxygenase (BVMO) dmxR6 then yields monodictylactone in equilibrium with monodictyphenone. In the case of the cryptosporioptides biosynthesis, monodictylactone is reduced at C-12 to an alcohol (by the short chain dehydrogenases dmxR12 or dmxR8) and hydroxylated at C-5 by dmxR9, yielding the electron-rich aromatic which could eliminate H(2)O to form the ortho-quinonemethide, followed by tautomerisation to paraquinone and complete the formal reduction to produce the 10-methylgroup. Conjugate addition of C-4a-OH to the resulting paraquinone by the monooxygenase dmxR10 then gives cyclohexadienone, which is then reduced at C-5 by the short chain dehydrogenase dmxR3 to give the dihydroxanthone. The 6,7-epoxide in the cryptosporioptides could be introduced by the cytochrome P450 monooxygenase dmxL3. The highly reducing PKS dmxL2 manufactures butyrate, which is further carboxylated by dmxL1 to form ethylmalonate. It is not yet clear whether the carboxylation occurs while the butyrate is attached to the ACP of dmxL2, but this unusual fungal metabolite could then be esterified to O-5 by the O-acetyltransferase dmxR13. Finally, dimerization performed by dmxR5 gives the observed dimers cryptosporioptides A, B and C as the final products of the pathway. This is Baeyer-Villiger monooxygenase dmxR6 from Cryptosporiopsis sp. (strain 8999).